We begin with the raw amino-acid sequence, 660 residues long: UvrABC system protein B (660 aa).

A Helicase ATP-binding domain is found at 26–414 (KKVLAGQRHQ…PEMTEQIIRP (389 aa)). Residue 39–46 (GATGTGKT) participates in ATP binding. Positions 92 to 115 (YYDYYQPEAYVPSTDTFIEKDASI) match the Beta-hairpin motif. The Helicase C-terminal domain occupies 430–596 (QIDNLIEEIR…TIRKEVRDVI (167 aa)). The UVR domain maps to 624-659 (EKVIEQMENEMKQAAKDLDFEKAAELRDVILELKAE).

Belongs to the UvrB family. As to quaternary structure, forms a heterotetramer with UvrA during the search for lesions. Interacts with UvrC in an incision complex.

It is found in the cytoplasm. In terms of biological role, the UvrABC repair system catalyzes the recognition and processing of DNA lesions. A damage recognition complex composed of 2 UvrA and 2 UvrB subunits scans DNA for abnormalities. Upon binding of the UvrA(2)B(2) complex to a putative damaged site, the DNA wraps around one UvrB monomer. DNA wrap is dependent on ATP binding by UvrB and probably causes local melting of the DNA helix, facilitating insertion of UvrB beta-hairpin between the DNA strands. Then UvrB probes one DNA strand for the presence of a lesion. If a lesion is found the UvrA subunits dissociate and the UvrB-DNA preincision complex is formed. This complex is subsequently bound by UvrC and the second UvrB is released. If no lesion is found, the DNA wraps around the other UvrB subunit that will check the other stand for damage. The chain is UvrABC system protein B from Oceanobacillus iheyensis (strain DSM 14371 / CIP 107618 / JCM 11309 / KCTC 3954 / HTE831).